Consider the following 653-residue polypeptide: ATP-dependent zinc metalloprotease FtsH 1 (653 aa).

The disordered stretch occupies residues 1–20 (MPENKNDKENKNDKENKNTK). At 1 to 30 (MPENKNDKENKNDKENKNTKEEKKKVKFSN) the chain is on the cytoplasmic side. Residues 31–51 (IIWVYIIFAVFFIGALISLNW) form a helical membrane-spanning segment. The Periplasmic portion of the chain corresponds to 52–126 (ENNPIISYSE…EYVESVGTKW (75 aa)). A helical membrane pass occupies residues 127-147 (WFGLLINIIPIVVMVLFFFWL). The Cytoplasmic segment spans residues 148–653 (YRSASAGARS…VVNHVNYQPV (506 aa)). 219 to 226 (GPPGTGKT) provides a ligand contact to ATP. Zn(2+) is bound at residue H441. The active site involves E442. Zn(2+) contacts are provided by H445 and D518.

In the central section; belongs to the AAA ATPase family. This sequence in the C-terminal section; belongs to the peptidase M41 family. In terms of assembly, homohexamer. Zn(2+) is required as a cofactor.

Its subcellular location is the cell inner membrane. Functionally, acts as a processive, ATP-dependent zinc metallopeptidase for both cytoplasmic and membrane proteins. Plays a role in the quality control of integral membrane proteins. The protein is ATP-dependent zinc metalloprotease FtsH 1 of Petrotoga mobilis (strain DSM 10674 / SJ95).